Consider the following 189-residue polypeptide: Pyridoxal 5'-phosphate synthase subunit PdxT (189 aa).

Residue 50–52 (GES) coordinates L-glutamine. Residue C80 is the Nucleophile of the active site. Residues R107 and 134–135 (IR) each bind L-glutamine. Residues H169 and E171 each act as charge relay system in the active site.

The protein belongs to the glutaminase PdxT/SNO family. In terms of assembly, in the presence of PdxS, forms a dodecamer of heterodimers. Only shows activity in the heterodimer.

The catalysed reaction is aldehydo-D-ribose 5-phosphate + D-glyceraldehyde 3-phosphate + L-glutamine = pyridoxal 5'-phosphate + L-glutamate + phosphate + 3 H2O + H(+). It carries out the reaction L-glutamine + H2O = L-glutamate + NH4(+). It functions in the pathway cofactor biosynthesis; pyridoxal 5'-phosphate biosynthesis. Catalyzes the hydrolysis of glutamine to glutamate and ammonia as part of the biosynthesis of pyridoxal 5'-phosphate. The resulting ammonia molecule is channeled to the active site of PdxS. The chain is Pyridoxal 5'-phosphate synthase subunit PdxT from Picrophilus torridus (strain ATCC 700027 / DSM 9790 / JCM 10055 / NBRC 100828 / KAW 2/3).